We begin with the raw amino-acid sequence, 395 residues long: S-adenosylmethionine synthase (395 aa).

His18 lines the ATP pocket. Mg(2+) is bound at residue Asp20. Glu46 is a binding site for K(+). L-methionine is bound by residues Glu59 and Gln103. The segment at 103–113 (QSADIAVGVDS) is flexible loop. ATP is bound by residues 170–172 (DAK), Asp244, 250–251 (RK), Ala267, and Lys271. Residue Asp244 coordinates L-methionine. Lys275 is an L-methionine binding site.

This sequence belongs to the AdoMet synthase family. As to quaternary structure, homotetramer; dimer of dimers. It depends on Mg(2+) as a cofactor. K(+) serves as cofactor.

The protein resides in the cytoplasm. The catalysed reaction is L-methionine + ATP + H2O = S-adenosyl-L-methionine + phosphate + diphosphate. The protein operates within amino-acid biosynthesis; S-adenosyl-L-methionine biosynthesis; S-adenosyl-L-methionine from L-methionine: step 1/1. Functionally, catalyzes the formation of S-adenosylmethionine (AdoMet) from methionine and ATP. The overall synthetic reaction is composed of two sequential steps, AdoMet formation and the subsequent tripolyphosphate hydrolysis which occurs prior to release of AdoMet from the enzyme. The protein is S-adenosylmethionine synthase of Gluconacetobacter diazotrophicus (strain ATCC 49037 / DSM 5601 / CCUG 37298 / CIP 103539 / LMG 7603 / PAl5).